The following is a 736-amino-acid chain: 1,4-alpha-glucan branching enzyme GlgB (736 aa).

Asp-417 (nucleophile) is an active-site residue. Glu-470 (proton donor) is an active-site residue.

It belongs to the glycosyl hydrolase 13 family. GlgB subfamily. Monomer.

It catalyses the reaction Transfers a segment of a (1-&gt;4)-alpha-D-glucan chain to a primary hydroxy group in a similar glucan chain.. It functions in the pathway glycan biosynthesis; glycogen biosynthesis. Catalyzes the formation of the alpha-1,6-glucosidic linkages in glycogen by scission of a 1,4-alpha-linked oligosaccharide from growing alpha-1,4-glucan chains and the subsequent attachment of the oligosaccharide to the alpha-1,6 position. In Pseudomonas putida (strain ATCC 47054 / DSM 6125 / CFBP 8728 / NCIMB 11950 / KT2440), this protein is 1,4-alpha-glucan branching enzyme GlgB.